The following is a 361-amino-acid chain: Probable cinnamyl alcohol dehydrogenase (361 aa).

Cysteine 48 is a binding site for Zn(2+). Threonine 50 is a binding site for NADP(+). Zn(2+) contacts are provided by histidine 70, glutamate 71, cysteine 101, cysteine 104, cysteine 107, cysteine 115, and cysteine 164. Residues threonine 168, glycine 189–glycine 194, serine 212–lysine 217, threonine 252, glycine 276, and serine 299–isoleucine 301 contribute to the NADP(+) site.

This sequence belongs to the zinc-containing alcohol dehydrogenase family. As to quaternary structure, homodimer. The cofactor is Zn(2+).

It carries out the reaction (E)-cinnamyl alcohol + NADP(+) = (E)-cinnamaldehyde + NADPH + H(+). It catalyses the reaction (E)-coniferol + NADP(+) = (E)-coniferaldehyde + NADPH + H(+). The enzyme catalyses (E)-sinapyl alcohol + NADP(+) = (E)-sinapaldehyde + NADPH + H(+). The catalysed reaction is (E)-4-coumaroyl alcohol + NADP(+) = (E)-4-coumaraldehyde + NADPH + H(+). It carries out the reaction (E)-caffeyl alcohol + NADP(+) = (E)-caffeyl aldehyde + NADPH + H(+). The protein operates within aromatic compound metabolism; phenylpropanoid biosynthesis. Involved in lignin biosynthesis. Catalyzes the final step specific for the production of lignin monomers. Catalyzes the NADPH-dependent reduction of coniferaldehyde, 5-hydroxyconiferaldehyde, sinapaldehyde, 4-coumaraldehyde and caffeyl aldehyde to their respective alcohols. The polypeptide is Probable cinnamyl alcohol dehydrogenase (Lolium perenne (Perennial ryegrass)).